The sequence spans 156 residues: 6,7-dimethyl-8-ribityllumazine synthase (156 aa).

Residues Phe22, 56–58, and 80–82 each bind 5-amino-6-(D-ribitylamino)uracil; these read AFE and VVI. (2S)-2-hydroxy-3-oxobutyl phosphate is bound at residue 85–86; sequence ST. Residue His88 is the Proton donor of the active site. Phe113 is a binding site for 5-amino-6-(D-ribitylamino)uracil. A (2S)-2-hydroxy-3-oxobutyl phosphate-binding site is contributed by Arg127.

The protein belongs to the DMRL synthase family.

It catalyses the reaction (2S)-2-hydroxy-3-oxobutyl phosphate + 5-amino-6-(D-ribitylamino)uracil = 6,7-dimethyl-8-(1-D-ribityl)lumazine + phosphate + 2 H2O + H(+). It participates in cofactor biosynthesis; riboflavin biosynthesis; riboflavin from 2-hydroxy-3-oxobutyl phosphate and 5-amino-6-(D-ribitylamino)uracil: step 1/2. Its function is as follows. Catalyzes the formation of 6,7-dimethyl-8-ribityllumazine by condensation of 5-amino-6-(D-ribitylamino)uracil with 3,4-dihydroxy-2-butanone 4-phosphate. This is the penultimate step in the biosynthesis of riboflavin. The sequence is that of 6,7-dimethyl-8-ribityllumazine synthase from Streptococcus agalactiae serotype Ia (strain ATCC 27591 / A909 / CDC SS700).